A 1072-amino-acid polypeptide reads, in one-letter code: DNA-directed RNA polymerase subunit beta (1072 aa).

This sequence belongs to the RNA polymerase beta chain family. In terms of assembly, in plastids the minimal PEP RNA polymerase catalytic core is composed of four subunits: alpha, beta, beta', and beta''. When a (nuclear-encoded) sigma factor is associated with the core the holoenzyme is formed, which can initiate transcription.

It localises to the plastid. It is found in the chloroplast. The catalysed reaction is RNA(n) + a ribonucleoside 5'-triphosphate = RNA(n+1) + diphosphate. Functionally, DNA-dependent RNA polymerase catalyzes the transcription of DNA into RNA using the four ribonucleoside triphosphates as substrates. The polypeptide is DNA-directed RNA polymerase subunit beta (Cycas taitungensis (Prince sago)).